An 876-amino-acid polypeptide reads, in one-letter code: Phosphoenolpyruvate carboxylase (876 aa).

Active-site residues include His138 and Lys544.

This sequence belongs to the PEPCase type 1 family. Requires Mg(2+) as cofactor.

The catalysed reaction is oxaloacetate + phosphate = phosphoenolpyruvate + hydrogencarbonate. Forms oxaloacetate, a four-carbon dicarboxylic acid source for the tricarboxylic acid cycle. In Marinomonas sp. (strain MWYL1), this protein is Phosphoenolpyruvate carboxylase.